Reading from the N-terminus, the 367-residue chain is MASPCLIAFLVFLCAIVSCCSDNPIDSCWRGDSNWGQNRMKLADCAVGFGSSTMGGKGGDFYTVTSADDNPVNPTPGTLRYGATREKTLWIIFSQNMNIKLKMPLYVAGHKTIDGRGADVHLGNGGPCLFMRKVSHVILHGLHIHGCNTSVLGDVLVSESIGVVPVHAQDGDAITMRNVTNAWIDHNSLSDCSDGLIDVTLGSTGITISNNHFFNHHKVMLLGHDDTYDDDKSMKVTVAFNQFGPNAGQRMPRARYGLVHVANNNYDPWNIYAIGGSSNPTILSEGNSFTAPNENYKKEVTKRIGCESTSACANWVWRSTRDAFSNGAYFVSSGKIEETNIYNSNEAFKVENGNAAPQLTKNAGVVA.

The N-terminal stretch at 1 to 21 is a signal peptide; sequence MASPCLIAFLVFLCAIVSCCS. Cystine bridges form between Cys-28/Cys-45 and Cys-128/Cys-147. A glycan (N-linked (GlcNAc...) asparagine) is linked at Asn-148. Asp-170 contacts Ca(2+). Asn-178 carries an N-linked (GlcNAc...) asparagine glycan. Residues Asp-194 and Asp-198 each coordinate Ca(2+). The active site involves Arg-250. A disulfide bond links Cys-306 and Cys-312.

It belongs to the polysaccharide lyase 1 family. Amb a subfamily. Ca(2+) serves as cofactor.

The catalysed reaction is Eliminative cleavage of (1-&gt;4)-alpha-D-galacturonan to give oligosaccharides with 4-deoxy-alpha-D-galact-4-enuronosyl groups at their non-reducing ends.. It participates in glycan metabolism; pectin degradation; 2-dehydro-3-deoxy-D-gluconate from pectin: step 2/5. Functionally, has pectate lyase activity. The protein is Pectate lyase 1 of Juniperus virginiana (Eastern redcedar).